Consider the following 297-residue polypeptide: uncharacterized protein (297 aa).

It belongs to the metallo-dependent hydrolases superfamily.

This is an uncharacterized protein from Sinorhizobium fredii (strain NBRC 101917 / NGR234).